The sequence spans 205 residues: uncharacterized protein (205 aa).

To M.jannaschii MJ0638 and MJ1252 and M.tuberculosis Rv2003c.

This is an uncharacterized protein from Methanocaldococcus jannaschii (strain ATCC 43067 / DSM 2661 / JAL-1 / JCM 10045 / NBRC 100440) (Methanococcus jannaschii).